The chain runs to 382 residues: Lipoyl synthase, mitochondrial (382 aa).

Residues 1-30 (MHGRRHLAASLARALTYAPSRSISSTPSLL) constitute a mitochondrion transit peptide. The span at 25–34 (STPSLLQTLD) shows a compositional bias: polar residues. A disordered region spans residues 25–46 (STPSLLQTLDPSTPSPAAAPPT). Residues cysteine 112, cysteine 117, cysteine 123, cysteine 143, cysteine 147, cysteine 150, and serine 359 each contribute to the [4Fe-4S] cluster site. Residues 128-348 (ETGTATATIM…RSLGVDMGFR (221 aa)) enclose the Radical SAM core domain.

Belongs to the radical SAM superfamily. Lipoyl synthase family. [4Fe-4S] cluster serves as cofactor.

The protein localises to the mitochondrion. The catalysed reaction is [[Fe-S] cluster scaffold protein carrying a second [4Fe-4S](2+) cluster] + N(6)-octanoyl-L-lysyl-[protein] + 2 oxidized [2Fe-2S]-[ferredoxin] + 2 S-adenosyl-L-methionine + 4 H(+) = [[Fe-S] cluster scaffold protein] + N(6)-[(R)-dihydrolipoyl]-L-lysyl-[protein] + 4 Fe(3+) + 2 hydrogen sulfide + 2 5'-deoxyadenosine + 2 L-methionine + 2 reduced [2Fe-2S]-[ferredoxin]. It functions in the pathway protein modification; protein lipoylation via endogenous pathway; protein N(6)-(lipoyl)lysine from octanoyl-[acyl-carrier-protein]: step 2/2. Catalyzes the radical-mediated insertion of two sulfur atoms into the C-6 and C-8 positions of the octanoyl moiety bound to the lipoyl domains of lipoate-dependent enzymes, thereby converting the octanoylated domains into lipoylated derivatives. This is Lipoyl synthase, mitochondrial from Oryza sativa subsp. japonica (Rice).